The chain runs to 223 residues: MRGLFITGTDTGVGKTEVTCALVANARAAGLDAVPMKPAQSGVAPGEPTDADRLHAACDGAEPLEVLCPYSFAAPLAPAVAARLEGRQVSFGAIVDGVRALAARHEAVLVEGAGGLLVPLTEEETYADLAVALGLSVLVVARAGLGTVNHTALTVEALRARGLVLTAIVLNQACETDDPSVPYNPAEIARVTGREPLARLAHVRDIAERQRFLRSRLAGKIQF.

Mg(2+) is bound at residue Thr16. The active site involves Lys37. Ser41 is a binding site for substrate. Asp50 and Glu111 together coordinate Mg(2+). ATP-binding positions include Asp50, 111–114 (EGAG), 171–172 (NQ), 201–203 (AHV), and Glu208.

This sequence belongs to the dethiobiotin synthetase family. As to quaternary structure, homodimer. Mg(2+) is required as a cofactor.

Its subcellular location is the cytoplasm. It catalyses the reaction (7R,8S)-7,8-diammoniononanoate + CO2 + ATP = (4R,5S)-dethiobiotin + ADP + phosphate + 3 H(+). It functions in the pathway cofactor biosynthesis; biotin biosynthesis; biotin from 7,8-diaminononanoate: step 1/2. Its function is as follows. Catalyzes a mechanistically unusual reaction, the ATP-dependent insertion of CO2 between the N7 and N8 nitrogen atoms of 7,8-diaminopelargonic acid (DAPA, also called 7,8-diammoniononanoate) to form a ureido ring. The chain is ATP-dependent dethiobiotin synthetase BioD from Anaeromyxobacter sp. (strain Fw109-5).